The following is a 140-amino-acid chain: Small ribosomal subunit protein uS12 (140 aa).

At aspartate 102 the chain carries 3-methylthioaspartic acid.

The protein belongs to the universal ribosomal protein uS12 family. In terms of assembly, part of the 30S ribosomal subunit. Contacts proteins S8 and S17. May interact with IF1 in the 30S initiation complex.

In terms of biological role, with S4 and S5 plays an important role in translational accuracy. Functionally, interacts with and stabilizes bases of the 16S rRNA that are involved in tRNA selection in the A site and with the mRNA backbone. Located at the interface of the 30S and 50S subunits, it traverses the body of the 30S subunit contacting proteins on the other side and probably holding the rRNA structure together. The combined cluster of proteins S8, S12 and S17 appears to hold together the shoulder and platform of the 30S subunit. This chain is Small ribosomal subunit protein uS12, found in Bacillus cereus (strain G9842).